Consider the following 273-residue polypeptide: Endochitinase EP3 (273 aa).

The signal sequence occupies residues 1-28 (MLTPTISKSISLVTILLVLQAFSNTTKA). Residue Asn-24 is glycosylated (N-linked (GlcNAc...) asparagine). The Chitin-binding type-1 domain maps to 29 to 63 (QNCGCSSELCCSQFGFCGNTSDYCGVGCQQGPCFA). Cystine bridges form between Cys-31-Cys-39, Cys-33-Cys-45, Cys-38-Cys-52, and Cys-56-Cys-61. A glycan (N-linked (GlcNAc...) asparagine) is linked at Asn-47. The segment at 70-273 (VSVAEIVTQE…GVDPGNNLTC (204 aa)) is catalytic. Residue Glu-136 is the Proton donor of the active site. 2 N-linked (GlcNAc...) asparagine glycosylation sites follow: Asn-157 and Asn-270.

It belongs to the glycosyl hydrolase 19 family. Chitinase class I subfamily. Expressed in cells surrounding embryos, stems, seedlings, pollen, roots, shoots, inflorescence, flowers, siliques and leaves. Present in seedpods and seed embryos, but not in roots, inflorescence stems, leaves and flowers.

It carries out the reaction Random endo-hydrolysis of N-acetyl-beta-D-glucosaminide (1-&gt;4)-beta-linkages in chitin and chitodextrins.. Functionally, probably involved in hypersensitive reaction upon Xanthomonas campestris infection. The sequence is that of Endochitinase EP3 from Arabidopsis thaliana (Mouse-ear cress).